We begin with the raw amino-acid sequence, 498 residues long: Phenylalanine--tRNA ligase alpha subunit (498 aa).

L-phenylalanine is bound by residues T328, 372–374, and Y412; that span reads QVE. Residue E414 coordinates Mg(2+). F438 contributes to the L-phenylalanine binding site.

This sequence belongs to the class-II aminoacyl-tRNA synthetase family. Phe-tRNA synthetase alpha subunit type 2 subfamily. In terms of assembly, tetramer of two alpha and two beta subunits. Mg(2+) is required as a cofactor.

It localises to the cytoplasm. It catalyses the reaction tRNA(Phe) + L-phenylalanine + ATP = L-phenylalanyl-tRNA(Phe) + AMP + diphosphate + H(+). The chain is Phenylalanine--tRNA ligase alpha subunit from Drosophila melanogaster (Fruit fly).